Consider the following 235-residue polypeptide: UPF0758 protein COPRO5265_1522 (235 aa).

Positions 109–235 (RITTPEDAIE…HVSLAREKLI (127 aa)) constitute an MPN domain. Zn(2+) is bound by residues His184, His186, and Asp197. Residues 184–197 (HNHPSGDPSPSRED) carry the JAMM motif motif.

The protein belongs to the UPF0758 family.

This chain is UPF0758 protein COPRO5265_1522, found in Coprothermobacter proteolyticus (strain ATCC 35245 / DSM 5265 / OCM 4 / BT).